A 198-amino-acid chain; its full sequence is Nucleoid occlusion factor SlmA (198 aa).

The region spanning 10–70 (NRREEILQSL…SLIEFIEDSL (61 aa)) is the HTH tetR-type domain. Positions 33–52 (TTAKLAASVGVSEAALYRHF) form a DNA-binding region, H-T-H motif. Residues 117-144 (EQDRLQGRINQLFERIEAQLRQVLREKR) adopt a coiled-coil conformation.

This sequence belongs to the nucleoid occlusion factor SlmA family. Homodimer. Interacts with FtsZ.

It localises to the cytoplasm. The protein resides in the nucleoid. In terms of biological role, required for nucleoid occlusion (NO) phenomenon, which prevents Z-ring formation and cell division over the nucleoid. Acts as a DNA-associated cell division inhibitor that binds simultaneously chromosomal DNA and FtsZ, and disrupts the assembly of FtsZ polymers. SlmA-DNA-binding sequences (SBS) are dispersed on non-Ter regions of the chromosome, preventing FtsZ polymerization at these regions. The protein is Nucleoid occlusion factor SlmA of Escherichia coli O45:K1 (strain S88 / ExPEC).